A 489-amino-acid polypeptide reads, in one-letter code: Type II restriction enzyme Sau3AI (489 aa).

Mg(2+) serves as cofactor.

The enzyme catalyses Endonucleolytic cleavage of DNA to give specific double-stranded fragments with terminal 5'-phosphates.. Its function is as follows. An E and P subtype restriction enzyme that recognizes the double-stranded sequence 5'-GATC-3' and cleaves before G-1. The polypeptide is Type II restriction enzyme Sau3AI (sau3AIR) (Staphylococcus aureus).